We begin with the raw amino-acid sequence, 315 residues long: HTH-type transcriptional regulator TreR (315 aa).

The 55-residue stretch at 5–59 (LTIKDIARLSGVGKSTVSRVLNNESGVSQLTRERVEAVMNQHGFSPSRSARAMRG) folds into the HTH lacI-type domain. The H-T-H motif DNA-binding region spans 7–26 (IKDIARLSGVGKSTVSRVLN). Residues 71-77 (RLDSLSE), glycine 126, arginine 147, 187-190 (DVTT), arginine 194, threonine 242, and tyrosine 284 contribute to the alpha,alpha-trehalose 6-phosphate site.

In terms of assembly, homodimer.

Functionally, repressor of the treBC operon. It is able to bind trehalose-6-phosphate and trehalose. The sequence is that of HTH-type transcriptional regulator TreR (treR) from Escherichia coli (strain K12).